A 232-amino-acid polypeptide reads, in one-letter code: uncharacterized protein (232 aa).

The stretch at 89 to 140 forms a coiled coil; it reads EFGTWQRRKNSLEDSLREVMKRRGELQDQLTAELGAIERMQTDLVGARQTLD.

This is an uncharacterized protein from Mycobacterium leprae (strain TN).